The primary structure comprises 332 residues: tRNA dimethylallyltransferase 2 (332 aa).

Position 15 to 22 (15 to 22) interacts with ATP; the sequence is GPTASGKT. Position 17–22 (17–22) interacts with substrate; the sequence is TASGKT. Interaction with substrate tRNA regions lie at residues 40–43 and 164–168; these read DSVM and QRIQR.

Belongs to the IPP transferase family. Monomer. It depends on Mg(2+) as a cofactor.

The enzyme catalyses adenosine(37) in tRNA + dimethylallyl diphosphate = N(6)-dimethylallyladenosine(37) in tRNA + diphosphate. Catalyzes the transfer of a dimethylallyl group onto the adenine at position 37 in tRNAs that read codons beginning with uridine, leading to the formation of N6-(dimethylallyl)adenosine (i(6)A). In Hahella chejuensis (strain KCTC 2396), this protein is tRNA dimethylallyltransferase 2.